A 607-amino-acid chain; its full sequence is All-trans-retinol 13,14-reductase (607 aa).

The first 22 residues, 1–22 (MWFAVVAIFLALVAFLYRYVVG), serve as a signal peptide directing secretion.

It belongs to the carotenoid/retinoid oxidoreductase family. CrtISO subfamily. It depends on NAD(+) as a cofactor. NADP(+) is required as a cofactor. FAD serves as cofactor.

It is found in the endoplasmic reticulum membrane. The catalysed reaction is all-trans-13,14-dihydroretinol + A = all-trans-retinol + AH2. Catalyzes the saturation of all-trans-retinol to all-trans-13,14-dihydroretinol. In addition, saturates the 7-8 double bond of all-trans-retinol to produce all-trans-7,8-dihydroretinol. Can also use vitamin A2 (all-trans-3,4-didehydroretinol) as a substrate, to produce all-trans-13,14-dihydro-3,4-didehydroretinol or all-trans-7,8-dihydro-3,4-didehydroretinol. May play a role in vitamin A metabolism. The polypeptide is All-trans-retinol 13,14-reductase (Danio rerio (Zebrafish)).